Here is a 223-residue protein sequence, read N- to C-terminus: Pyridoxine/pyridoxamine 5'-phosphate oxidase (223 aa).

Substrate is bound by residues 9–12 and Lys-76; that span reads RVGY. Residues 71 to 76, 86 to 87, Lys-93, and Gln-115 contribute to the FMN site; these read RTVLCK and FT. 3 residues coordinate substrate: Tyr-133, Arg-137, and Ser-141. Residues 150–151 and Trp-196 contribute to the FMN site; that span reads QS. Position 202-204 (202-204) interacts with substrate; sequence RMH. Residue Arg-206 participates in FMN binding.

Belongs to the pyridoxamine 5'-phosphate oxidase family. As to quaternary structure, homodimer. Requires FMN as cofactor.

The catalysed reaction is pyridoxamine 5'-phosphate + O2 + H2O = pyridoxal 5'-phosphate + H2O2 + NH4(+). It carries out the reaction pyridoxine 5'-phosphate + O2 = pyridoxal 5'-phosphate + H2O2. The protein operates within cofactor metabolism; pyridoxal 5'-phosphate salvage; pyridoxal 5'-phosphate from pyridoxamine 5'-phosphate: step 1/1. It participates in cofactor metabolism; pyridoxal 5'-phosphate salvage; pyridoxal 5'-phosphate from pyridoxine 5'-phosphate: step 1/1. Functionally, catalyzes the oxidation of either pyridoxine 5'-phosphate (PNP) or pyridoxamine 5'-phosphate (PMP) into pyridoxal 5'-phosphate (PLP). In Rhodococcus jostii (strain RHA1), this protein is Pyridoxine/pyridoxamine 5'-phosphate oxidase.